The chain runs to 78 residues: Small ribosomal subunit protein bS20 (78 aa).

This sequence belongs to the bacterial ribosomal protein bS20 family.

Functionally, binds directly to 16S ribosomal RNA. In Streptococcus sanguinis (strain SK36), this protein is Small ribosomal subunit protein bS20.